Reading from the N-terminus, the 204-residue chain is UPF0637 protein lin1053 (204 aa).

It belongs to the UPF0637 family.

The polypeptide is UPF0637 protein lin1053 (Listeria innocua serovar 6a (strain ATCC BAA-680 / CLIP 11262)).